A 320-amino-acid chain; its full sequence is Coproporphyrin III ferrochelatase (320 aa).

The Fe(2+) site is built by His-194 and Glu-273.

The protein belongs to the ferrochelatase family.

Its subcellular location is the cytoplasm. The enzyme catalyses Fe-coproporphyrin III + 2 H(+) = coproporphyrin III + Fe(2+). It participates in porphyrin-containing compound metabolism; protoheme biosynthesis. Involved in coproporphyrin-dependent heme b biosynthesis. Catalyzes the insertion of ferrous iron into coproporphyrin III to form Fe-coproporphyrin III. This Symbiobacterium thermophilum (strain DSM 24528 / JCM 14929 / IAM 14863 / T) protein is Coproporphyrin III ferrochelatase.